Here is a 164-residue protein sequence, read N- to C-terminus: MTQITFKNNPIKLSGSEVNEGDIAPNFTVLDNSLNQITLDDYKNKKKLISVIPSIDTGVCDSQTRKFNEEASAEDGVVLTISVDLPFAQKRWCASSGLDNVITLSDHKDLSFGRNYGLVMDELRLLARSVFVLNENNKVVYKEIVSEGTNYPDFEAALKAYRNI.

A Thioredoxin domain is found at 18–163 (VNEGDIAPNF…FEAALKAYRN (146 aa)). The active-site Cysteine sulfenic acid (-SOH) intermediate is the cysteine 60. Cysteine 60 and cysteine 93 are oxidised to a cystine.

It belongs to the peroxiredoxin family. Tpx subfamily. As to quaternary structure, homodimer.

It catalyses the reaction a hydroperoxide + [thioredoxin]-dithiol = an alcohol + [thioredoxin]-disulfide + H2O. Thiol-specific peroxidase that catalyzes the reduction of hydrogen peroxide and organic hydroperoxides to water and alcohols, respectively. Plays a role in cell protection against oxidative stress by detoxifying peroxides. The polypeptide is Thiol peroxidase (Staphylococcus epidermidis (strain ATCC 35984 / DSM 28319 / BCRC 17069 / CCUG 31568 / BM 3577 / RP62A)).